The primary structure comprises 282 residues: MVEAQLVLPAPAKLNLMLHILGRRPDGYHELQTLFQFLDYGDELGFALRQDGVIRLQTDVPGVAHDSNLIVKAARALQKQSGCTLGMDIWLEKRLPMGGGIGGGSSDAATTLLGLNHLWQLGWDEDRLAQLGLTLGADVPVFVRGHAAFAEGVGEILTPVDPEEPWYLVLVPQVAVSTAEIFSDPLLTRDTAPIKVRPVPKGNSRNDCKAAVERRYPEVRNALNLLGKFTEAKLTGTGSCVFGAFPNKAEADKVSALLTETLTGFVAKGSNISMLHRKLQIL.

Lys13 is a catalytic residue. Residue Pro96–Ser106 participates in ATP binding. Asp138 is a catalytic residue.

This sequence belongs to the GHMP kinase family. IspE subfamily.

It carries out the reaction 4-CDP-2-C-methyl-D-erythritol + ATP = 4-CDP-2-C-methyl-D-erythritol 2-phosphate + ADP + H(+). The protein operates within isoprenoid biosynthesis; isopentenyl diphosphate biosynthesis via DXP pathway; isopentenyl diphosphate from 1-deoxy-D-xylulose 5-phosphate: step 3/6. Catalyzes the phosphorylation of the position 2 hydroxy group of 4-diphosphocytidyl-2C-methyl-D-erythritol. In Pseudomonas syringae pv. tomato (strain ATCC BAA-871 / DC3000), this protein is 4-diphosphocytidyl-2-C-methyl-D-erythritol kinase.